Here is a 1390-residue protein sequence, read N- to C-terminus: ATPase family AAA domain-containing protein 2 (1390 aa).

The tract at residues 40–63 (RSAGAAQKKPAATTAKAGDGSSVK) is disordered. The span at 42–57 (AGAAQKKPAATTAKAG) shows a compositional bias: low complexity. Ser60 and Ser61 each carry phosphoserine. A Glycyl lysine isopeptide (Lys-Gly) (interchain with G-Cter in SUMO2) cross-link involves residue Lys125. A phosphoserine mark is found at Ser165 and Ser170. Residues 216–380 (LNMYTRGKQK…HFERRRKRSR (165 aa)) are disordered. Basic and acidic residues predominate over residues 223-232 (KQKDIQRTDE). Acidic residues predominate over residues 244–288 (SSEEGEDQEHEDDGEDEDDEDDDDDDDDDDDDDDEDDEDEEDGEE). Lys317 is covalently cross-linked (Glycyl lysine isopeptide (Lys-Gly) (interchain with G-Cter in SUMO2)). Residues Ser327, Ser337, Ser342, and Ser410 each carry the phosphoserine modification. Residue 467–474 (GPPGTGKT) coordinates ATP. A phosphoserine mark is found at Ser746 and Ser751. Coiled coils occupy residues 970–994 (LTAE…IFLR) and 1086–1112 (YAII…KKRG). The Bromo domain occupies 980-1092 (EQEEDTFREL…DTAYAIIKEE (113 aa)). Residues 1124-1163 (HVMPKQNSTLVGDKRSDPEQNEKLKTPSTPVACSTPAQLK) are disordered. Lys1128 participates in a covalent cross-link: Glycyl lysine isopeptide (Lys-Gly) (interchain with G-Cter in SUMO2). Positions 1135-1148 (GDKRSDPEQNEKLK) are enriched in basic and acidic residues. Ser1139 is modified (phosphoserine). Residue Lys1148 forms a Glycyl lysine isopeptide (Lys-Gly) (interchain with G-Cter in SUMO2) linkage. Phosphothreonine occurs at positions 1149, 1152, and 1176. Polar residues predominate over residues 1149-1160 (TPSTPVACSTPA). Positions 1181–1242 (RKISQAKDDS…SESKLELRNN (62 aa)) are disordered. Over residues 1185–1200 (QAKDDSQNAIDHKIES) the composition is skewed to basic and acidic residues. Ser1200, Ser1233, and Ser1235 each carry phosphoserine. A compositionally biased stretch (polar residues) spans 1229–1242 (QQNASESKLELRNN). Lys1236 is covalently cross-linked (Glycyl lysine isopeptide (Lys-Gly) (interchain with G-Cter in SUMO2)). Phosphoserine occurs at positions 1243 and 1302. Residue Thr1323 is modified to Phosphothreonine.

The protein belongs to the AAA ATPase family. In terms of assembly, interacts with ESR1 and NCOA3 and these interactions are enhanced by estradiol. Interacts with acetylated lysine residues on histone H1.4, H2A, H2B and H3 (in vitro). In terms of tissue distribution, highly expressed in estrogen receptor positive breast tumors and in osteosarcoma tumors.

The protein resides in the nucleus. The catalysed reaction is ATP + H2O = ADP + phosphate + H(+). In terms of biological role, may be a transcriptional coactivator of the nuclear receptor ESR1 required to induce the expression of a subset of estradiol target genes, such as CCND1, MYC and E2F1. May play a role in the recruitment or occupancy of CREBBP at some ESR1 target gene promoters. May be required for histone hyperacetylation. Involved in the estrogen-induced cell proliferation and cell cycle progression of breast cancer cells. The protein is ATPase family AAA domain-containing protein 2 (ATAD2) of Homo sapiens (Human).